The following is a 176-amino-acid chain: Translation initiation factor IF-3 (176 aa).

It belongs to the IF-3 family. As to quaternary structure, monomer.

The protein resides in the cytoplasm. Functionally, IF-3 binds to the 30S ribosomal subunit and shifts the equilibrium between 70S ribosomes and their 50S and 30S subunits in favor of the free subunits, thus enhancing the availability of 30S subunits on which protein synthesis initiation begins. In Streptococcus pyogenes serotype M18 (strain MGAS8232), this protein is Translation initiation factor IF-3.